A 1009-amino-acid polypeptide reads, in one-letter code: MEALTLWLLPWICQCVTVRADSIIHIGAIFEENAAKDDRVFQLAVSDLSLNDDILQSEKITYSIKVIEANNPFQAVQEACDLMTQGILALVTSTGCASANALQSLTDAMHIPHLFVQRNPGGSPRTACHLNPSPDGEAYTLASRPPVRLNDVMLRLVTELRWQKFVMFYDSEYDIRGLQSFLDQASRLGLDVSLQKVDKNISHVFTSLFTTMKTEELNRYRDTLRRAILLLSPQGAHSFINEAVETNLASKDSHWVFVNEEISDPEILDLVHSALGRMTVVRQIFPSAKDNQKCMRNNHRISSLLCDPQEGYLQMLQISNLYLYDSVLMLANAFHRKLEDRKWHSMASLNCIRKSTKPWNGGRSMLDTIKKGHITGLTGVMEFREDSSNPYVQFEILGTTYSETFGKDMRKLATWDSEKGLNGSLQERPMGSRLQGLTLKVVTVLEEPFVMVAENILGQPKRYKGFSIDVLDALAKALGFKYEIYQAPDGRYGHQLHNTSWNGMIGELISKRADLAISAITITPERESVVDFSKRYMDYSVGILIKKPEEKISIFSLFAPFDFAVWACIAAAIPVVGVLIFVLNRIQAVRSQSATQPRPSASATLHSAIWIVYGAFVQQGGESSVNSVAMRIVMGSWWLFTLIVCSSYTANLAAFLTVSRMDNPIRTFQDLSKQLEMSYGTVRDSAVYEYFRAKGTNPLEQDSTFAELWRTISKNGGADNCVSNPSEGIRKAKKGNYAFLWDVAVVEYAALTDDDCSVTVIGNSISSKGYGIALQHGSPYRDLFSQRILELQDTGDLDVLKQKWWPHTGRCDLTSHSSTQTEGKSLKLHSFAGVFCILAIGLLLACLVAALELWWNSNRCHQETPKEDKEVNLEQVHRRINSLMDEDIAHKQISPASIELSALEMGGLAPSQALEPTREYQNTQLSVSTFLPEQSSHGTSRTLSSGPSSNLPLPLSSSATMPSIQCKHRSPNGGLFRQSPVKTPIPMSFQPVPGGVLPEALDTSHGTSI.

Positions 1-20 are cleaved as a signal peptide; the sequence is MEALTLWLLPWICQCVTVRA. The segment at 21-436 is interaction with CBLN1; sequence DSIIHIGAIF…ERPMGSRLQG (416 aa). Residues 21 to 562 lie on the Extracellular side of the membrane; the sequence is DSIIHIGAIF…SIFSLFAPFD (542 aa). Cystine bridges form between Cys80-Cys351, Cys96-Cys128, and Cys294-Cys306. N-linked (GlcNAc...) asparagine glycosylation is found at Asn131 and Asn200. Residues Asn422 and Asn498 are each glycosylated (N-linked (GlcNAc...) asparagine). Positions 527, 530, and 531 each coordinate Ca(2+). The chain crosses the membrane as a helical span at residues 563-583; the sequence is FAVWACIAAAIPVVGVLIFVL. Residues 584 to 637 lie on the Cytoplasmic side of the membrane; it reads NRIQAVRSQSATQPRPSASATLHSAIWIVYGAFVQQGGESSVNSVAMRIVMGSW. The chain crosses the membrane as a helical span at residues 638 to 658; sequence WLFTLIVCSSYTANLAAFLTV. At 659 to 830 the chain is on the extracellular side; sequence SRMDNPIRTF…TEGKSLKLHS (172 aa). 3 residues coordinate Ca(2+): Asp753, Asp755, and Ser757. The chain crosses the membrane as a helical span at residues 831–851; that stretch reads FAGVFCILAIGLLLACLVAAL. The Cytoplasmic segment spans residues 852 to 1009; that stretch reads ELWWNSNRCH…ALDTSHGTSI (158 aa). Residues 931-942 are compositionally biased toward polar residues; sequence LPEQSSHGTSRT. The interval 931–960 is disordered; it reads LPEQSSHGTSRTLSSGPSSNLPLPLSSSAT. The span at 943-958 shows a compositional bias: low complexity; it reads LSSGPSSNLPLPLSSS.

It belongs to the glutamate-gated ion channel (TC 1.A.10.1) family. GRID1 subfamily. As to quaternary structure, homodimer. Interacts (via extracellular N-terminal domain) with CBLN1 (via C1q domain), and more weakly with CBLN2; the interactions mediate the trans-synaptic adhesion complexes also with neurexins and are required for ligand-gated cation channel activity. In terms of tissue distribution, equally in forebrain and cerebellum.

Its subcellular location is the postsynaptic cell membrane. It carries out the reaction Ca(2+)(in) = Ca(2+)(out). The catalysed reaction is Na(+)(in) = Na(+)(out). Member of the ionotropic glutamate receptor family, which plays a crucial role in synaptic organization and signal transduction in the central nervous system. Although it shares structural features with ionotropic glutamate receptors, does not bind glutamate as a primary ligand. Instead, forms trans-synaptic adhesion complexes with presynaptic neurexins and cerebellins, regulating NMDA and AMPA receptor activity and influencing synaptic plasticity through signal transduction. In the presence of NRX1B-CBLN1, forms cation-selective channels that are proposed to be gated by glycine and D-serine. However, recent research disputes this ligand-gated cation channel activity. Cation-selective ion channel can be triggered by GRM1 in dopaminergic neurons. Also acts as a receptor for GABA, modulating inhibitory synaptic plasticity through non-ionotropic mechanisms. The chain is Glutamate receptor ionotropic, delta-1 (Grid1) from Mus musculus (Mouse).